We begin with the raw amino-acid sequence, 469 residues long: Neuraminidase (469 aa).

Topologically, residues 1 to 9 are intravirion; that stretch reads MNPNQKIIT. The chain crosses the membrane as a helical span at residues 10–30; that stretch reads IGSVSLTIATICFLMQIAILV. Residues 11–33 are involved in apical transport and lipid raft association; that stretch reads GSVSLTIATICFLMQIAILVTTV. At 31 to 469 the chain is on the virion surface side; that stretch reads TTVTLHFKQY…DGADINLMPI (439 aa). The interval 36-88 is hypervariable stalk region; that stretch reads HFKQYECDSPANNQVMPCEPISIERNITEIVYLTNTTIEKEICPKLVEYRNWS. N-linked (GlcNAc...) asparagine; by host glycans are attached at residues N61, N70, and N86. A head of neuraminidase region spans residues 91-469; that stretch reads QCKITGFAPF…DGADINLMPI (379 aa). Disulfide bonds link C92–C417, C124–C129, C183–C230, C232–C237, C278–C291, C280–C289, C318–C337, and C421–C447. R118 is a binding site for substrate. N-linked (GlcNAc...) asparagine; by host glycosylation is present at N146. The active-site Proton donor/acceptor is the D151. R152 provides a ligand contact to substrate. N-linked (GlcNAc...) asparagine; by host glycosylation is found at N200 and N234. A substrate-binding site is contributed by 276-277; sequence EE. R292 lines the substrate pocket. Residues D293, G297, and D324 each contribute to the Ca(2+) site. R371 serves as a coordination point for substrate. N402 carries N-linked (GlcNAc...) asparagine; by host glycosylation. Y406 (nucleophile) is an active-site residue.

The protein belongs to the glycosyl hydrolase 34 family. Homotetramer. Ca(2+) is required as a cofactor. N-glycosylated.

Its subcellular location is the virion membrane. The protein resides in the host apical cell membrane. The catalysed reaction is Hydrolysis of alpha-(2-&gt;3)-, alpha-(2-&gt;6)-, alpha-(2-&gt;8)- glycosidic linkages of terminal sialic acid residues in oligosaccharides, glycoproteins, glycolipids, colominic acid and synthetic substrates.. Inhibited by the neuraminidase inhibitors zanamivir (Relenza) and oseltamivir (Tamiflu). These drugs interfere with the release of progeny virus from infected cells and are effective against all influenza strains. Resistance to neuraminidase inhibitors is quite rare. In terms of biological role, catalyzes the removal of terminal sialic acid residues from viral and cellular glycoconjugates. Cleaves off the terminal sialic acids on the glycosylated HA during virus budding to facilitate virus release. Additionally helps virus spread through the circulation by further removing sialic acids from the cell surface. These cleavages prevent self-aggregation and ensure the efficient spread of the progeny virus from cell to cell. Otherwise, infection would be limited to one round of replication. Described as a receptor-destroying enzyme because it cleaves a terminal sialic acid from the cellular receptors. May facilitate viral invasion of the upper airways by cleaving the sialic acid moieties on the mucin of the airway epithelial cells. Likely to plays a role in the budding process through its association with lipid rafts during intracellular transport. May additionally display a raft-association independent effect on budding. Plays a role in the determination of host range restriction on replication and virulence. Sialidase activity in late endosome/lysosome traffic seems to enhance virus replication. The protein is Neuraminidase of Aves (whales).